Here is a 312-residue protein sequence, read N- to C-terminus: Methionyl-tRNA formyltransferase (312 aa).

107-110 is a binding site for (6S)-5,6,7,8-tetrahydrofolate; it reads SLLP.

This sequence belongs to the Fmt family.

The enzyme catalyses L-methionyl-tRNA(fMet) + (6R)-10-formyltetrahydrofolate = N-formyl-L-methionyl-tRNA(fMet) + (6S)-5,6,7,8-tetrahydrofolate + H(+). In terms of biological role, attaches a formyl group to the free amino group of methionyl-tRNA(fMet). The formyl group appears to play a dual role in the initiator identity of N-formylmethionyl-tRNA by promoting its recognition by IF2 and preventing the misappropriation of this tRNA by the elongation apparatus. This chain is Methionyl-tRNA formyltransferase, found in Endomicrobium trichonymphae.